The sequence spans 179 residues: uncharacterized protein (179 aa).

The protein resides in the plastid. Its subcellular location is the cyanelle. This is an uncharacterized protein from Cyanophora paradoxa.